Consider the following 75-residue polypeptide: Ferredoxin-thioredoxin reductase, variable chain (75 aa).

Residues Q43 to P46 are interaction with ferredoxin.

This sequence belongs to the ferredoxin thioredoxin reductase alpha subunit family. In terms of assembly, heterodimer of subunit A (variable subunit) and subunit B (catalytic subunit). Heterodimeric FTR forms a complex with ferredoxin and thioredoxin.

Its function is as follows. Variable subunit of the ferredoxin-thioredoxin reductase (FTR), which catalyzes the two-electron reduction of thioredoxins by the electrons provided by reduced ferredoxin. In Synechocystis sp. (strain ATCC 27184 / PCC 6803 / Kazusa), this protein is Ferredoxin-thioredoxin reductase, variable chain (ftrV).